The chain runs to 93 residues: Small ribosomal subunit protein uS17 (93 aa).

This sequence belongs to the universal ribosomal protein uS17 family. In terms of assembly, part of the 30S ribosomal subunit.

In terms of biological role, one of the primary rRNA binding proteins, it binds specifically to the 5'-end of 16S ribosomal RNA. This chain is Small ribosomal subunit protein uS17, found in Corynebacterium kroppenstedtii (strain DSM 44385 / JCM 11950 / CIP 105744 / CCUG 35717).